Reading from the N-terminus, the 379-residue chain is Muconate cycloisomerase 1-1 (379 aa).

Lys169 is a catalytic residue. Asp198, Glu224, and Asp247 together coordinate Mn(2+).

It belongs to the mandelate racemase/muconate lactonizing enzyme family. Homooctamer. It depends on Mn(2+) as a cofactor.

The catalysed reaction is (S)-muconolactone = cis,cis-muconate + H(+). It participates in aromatic compound metabolism; beta-ketoadipate pathway; 5-oxo-4,5-dihydro-2-furylacetate from catechol: step 2/3. Its function is as follows. Catalyzes a syn cycloisomerization. In Acinetobacter lwoffii, this protein is Muconate cycloisomerase 1-1 (catB1).